The chain runs to 593 residues: NADH-quinone oxidoreductase subunit C/D (593 aa).

The NADH dehydrogenase I subunit C stretch occupies residues 1–184 (MTTGSALYIP…DPFSLNLAKQ (184 aa)). The NADH dehydrogenase I subunit D stretch occupies residues 208–593 (DYMFLNLGPN…IDFVMADVDR (386 aa)).

This sequence in the N-terminal section; belongs to the complex I 30 kDa subunit family. The protein in the C-terminal section; belongs to the complex I 49 kDa subunit family. In terms of assembly, NDH-1 is composed of 13 different subunits. Subunits NuoB, CD, E, F, and G constitute the peripheral sector of the complex.

It is found in the cell inner membrane. It catalyses the reaction a quinone + NADH + 5 H(+)(in) = a quinol + NAD(+) + 4 H(+)(out). NDH-1 shuttles electrons from NADH, via FMN and iron-sulfur (Fe-S) centers, to quinones in the respiratory chain. The immediate electron acceptor for the enzyme in this species is believed to be ubiquinone. Couples the redox reaction to proton translocation (for every two electrons transferred, four hydrogen ions are translocated across the cytoplasmic membrane), and thus conserves the redox energy in a proton gradient. This is NADH-quinone oxidoreductase subunit C/D from Pseudomonas fluorescens (strain ATCC BAA-477 / NRRL B-23932 / Pf-5).